A 362-amino-acid chain; its full sequence is 5-amino-6-(D-ribitylamino)uracil--L-tyrosine 4-hydroxyphenyl transferase (362 aa).

Residues 48 to 294 (ITYVVNRNIN…GDTIKNIQVS (247 aa)) enclose the Radical SAM core domain. Residues Cys-62, Cys-66, and Cys-69 each coordinate [4Fe-4S] cluster.

It belongs to the radical SAM superfamily. CofH family. In terms of assembly, consists of two subunits, CofG and CofH. It depends on [4Fe-4S] cluster as a cofactor.

The enzyme catalyses 5-amino-6-(D-ribitylamino)uracil + L-tyrosine + S-adenosyl-L-methionine = 5-amino-5-(4-hydroxybenzyl)-6-(D-ribitylimino)-5,6-dihydrouracil + 2-iminoacetate + 5'-deoxyadenosine + L-methionine + H(+). The protein operates within cofactor biosynthesis; coenzyme F0 biosynthesis. Functionally, catalyzes the radical-mediated synthesis of 5-amino-5-(4-hydroxybenzyl)-6-(D-ribitylimino)-5,6-dihydrouracil from 5-amino-6-(D-ribitylamino)uracil and L-tyrosine. The chain is 5-amino-6-(D-ribitylamino)uracil--L-tyrosine 4-hydroxyphenyl transferase from Methanococcus aeolicus (strain ATCC BAA-1280 / DSM 17508 / OCM 812 / Nankai-3).